The sequence spans 149 residues: Arginine repressor (149 aa).

Belongs to the ArgR family.

It localises to the cytoplasm. It participates in amino-acid biosynthesis; L-arginine biosynthesis [regulation]. Functionally, regulates arginine biosynthesis genes. This is Arginine repressor from Listeria innocua serovar 6a (strain ATCC BAA-680 / CLIP 11262).